The following is a 222-amino-acid chain: Germin-like protein subfamily 1 member 14 (222 aa).

The N-terminal stretch at 1–22 is a signal peptide; the sequence is MRFSKSLILITLSALVISFAEA. Cysteines 32 and 49 form a disulfide. The region spanning 63–214 is the Cupin type-1 domain; the sequence is SGLNQAGTTN…AFQLDVNVVK (152 aa). N-linked (GlcNAc...) asparagine glycosylation is present at Asn-78. 4 residues coordinate Mn(2+): His-111, His-113, Glu-118, and His-160.

It belongs to the germin family. Oligomer (believed to be a pentamer but probably hexamer).

The protein localises to the secreted. It is found in the extracellular space. Its subcellular location is the apoplast. Functionally, may play a role in plant defense. Probably has no oxalate oxidase activity even if the active site is conserved. This is Germin-like protein subfamily 1 member 14 from Arabidopsis thaliana (Mouse-ear cress).